We begin with the raw amino-acid sequence, 301 residues long: GTP cyclohydrolase FolE2 (301 aa).

Belongs to the GTP cyclohydrolase IV family.

It carries out the reaction GTP + H2O = 7,8-dihydroneopterin 3'-triphosphate + formate + H(+). It participates in cofactor biosynthesis; 7,8-dihydroneopterin triphosphate biosynthesis; 7,8-dihydroneopterin triphosphate from GTP: step 1/1. In terms of biological role, converts GTP to 7,8-dihydroneopterin triphosphate. The sequence is that of GTP cyclohydrolase FolE2 from Pseudomonas syringae pv. tomato (strain ATCC BAA-871 / DC3000).